The sequence spans 337 residues: uncharacterized protein (337 aa).

The 59-residue stretch at 279 to 337 (SIVAKRNIKKGEYLSVDNISFKRPGRGIETKYLSIILNRKIKNDKEEDDIIYWDDLLGD) folds into the AFP-like domain.

It to B.subtilis SpsE.

This is an uncharacterized protein from Methanocaldococcus jannaschii (strain ATCC 43067 / DSM 2661 / JAL-1 / JCM 10045 / NBRC 100440) (Methanococcus jannaschii).